The primary structure comprises 79 residues: D-alanyl carrier protein (79 aa).

In terms of domain architecture, Carrier spans 1 to 77 (MDIKSEVLKI…KIIEGITELR (77 aa)). Ser-35 is modified (O-(pantetheine 4'-phosphoryl)serine).

This sequence belongs to the DltC family. In terms of processing, 4'-phosphopantetheine is transferred from CoA to a specific serine of apo-DCP.

It localises to the cytoplasm. It participates in cell wall biogenesis; lipoteichoic acid biosynthesis. In terms of biological role, carrier protein involved in the D-alanylation of lipoteichoic acid (LTA). The loading of thioester-linked D-alanine onto DltC is catalyzed by D-alanine--D-alanyl carrier protein ligase DltA. The DltC-carried D-alanyl group is further transferred to cell membrane phosphatidylglycerol (PG) by forming an ester bond, probably catalyzed by DltD. D-alanylation of LTA plays an important role in modulating the properties of the cell wall in Gram-positive bacteria, influencing the net charge of the cell wall. This chain is D-alanyl carrier protein, found in Streptococcus mutans serotype c (strain ATCC 700610 / UA159).